The primary structure comprises 314 residues: Ribosomal protein L11 methyltransferase (314 aa).

4 residues coordinate S-adenosyl-L-methionine: Thr161, Gly182, Asp204, and Asn248.

The protein belongs to the methyltransferase superfamily. PrmA family.

It is found in the cytoplasm. It carries out the reaction L-lysyl-[protein] + 3 S-adenosyl-L-methionine = N(6),N(6),N(6)-trimethyl-L-lysyl-[protein] + 3 S-adenosyl-L-homocysteine + 3 H(+). In terms of biological role, methylates ribosomal protein L11. The sequence is that of Ribosomal protein L11 methyltransferase from Listeria monocytogenes serotype 1/2a (strain 10403S).